Consider the following 342-residue polypeptide: 29 kDa ribonucleoprotein, chloroplastic (342 aa).

The N-terminal 65 residues, Met-1–Arg-65, are a transit peptide targeting the chloroplast. Residues Leu-99–Pro-177 form the RRM 1 domain. Ser-107 and Ser-204 each carry phosphoserine. The interval Gly-167–Ser-255 is disordered. The linker (Gly-rich) stretch occupies residues Pro-178 to Gly-256. 2 stretches are compositionally biased toward gly residues: residues Arg-190–Gly-237 and Ser-245–Ser-255. The RRM 2 domain maps to Asn-257–Ala-335.

The protein resides in the plastid. It localises to the chloroplast. Stabilizes specific chloroplast mRNAs. Required for normal chloroplast development under cold stress conditions by stabilizing transcripts of numerous mRNAs under these conditions. The polypeptide is 29 kDa ribonucleoprotein, chloroplastic (Arabidopsis thaliana (Mouse-ear cress)).